Reading from the N-terminus, the 406-residue chain is Argininosuccinate synthase (406 aa).

Residues 10 to 18 (AYSGGLDTS) and Ala37 each bind ATP. L-citrulline is bound by residues Tyr88 and Ser93. Residue Gly118 coordinates ATP. L-aspartate-binding residues include Thr120, Asn124, and Asp125. An L-citrulline-binding site is contributed by Asn124. Residues Arg128, Ser179, Ser188, Glu264, and Tyr276 each contribute to the L-citrulline site.

Belongs to the argininosuccinate synthase family. Type 1 subfamily. In terms of assembly, homotetramer.

It is found in the cytoplasm. The enzyme catalyses L-citrulline + L-aspartate + ATP = 2-(N(omega)-L-arginino)succinate + AMP + diphosphate + H(+). It functions in the pathway amino-acid biosynthesis; L-arginine biosynthesis; L-arginine from L-ornithine and carbamoyl phosphate: step 2/3. This is Argininosuccinate synthase from Roseobacter denitrificans (strain ATCC 33942 / OCh 114) (Erythrobacter sp. (strain OCh 114)).